The chain runs to 154 residues: Toxin YhaV (154 aa).

Homohexamer; forms a complex with PrlF (SohA) with stoichiometry PrlF(2)-YhaV(4), possibly as a YhaV(2)-PrlF(2)-YhaV(2) complex like the MazFE complex. May dimerize in solution.

Functionally, toxic component of a type II toxin-antitoxin (TA) system. Has RNase activity in vitro. Acts as a transcription factor. The YhaV/PrlF complex binds the prlF-yhaV operon, probably negatively regulating its expression. This is Toxin YhaV (yhaV) from Escherichia coli O157:H7.